Here is a 150-residue protein sequence, read N- to C-terminus: Large ribosomal subunit protein bL9 (150 aa).

It belongs to the bacterial ribosomal protein bL9 family.

In terms of biological role, binds to the 23S rRNA. In Albidiferax ferrireducens (strain ATCC BAA-621 / DSM 15236 / T118) (Rhodoferax ferrireducens), this protein is Large ribosomal subunit protein bL9.